A 141-amino-acid chain; its full sequence is ATP synthase epsilon chain (141 aa).

It belongs to the ATPase epsilon chain family. F-type ATPases have 2 components, CF(1) - the catalytic core - and CF(0) - the membrane proton channel. CF(1) has five subunits: alpha(3), beta(3), gamma(1), delta(1), epsilon(1). CF(0) has three main subunits: a, b and c.

It localises to the cell inner membrane. Produces ATP from ADP in the presence of a proton gradient across the membrane. The protein is ATP synthase epsilon chain of Pseudomonas fluorescens (strain Pf0-1).